A 91-amino-acid chain; its full sequence is Small ribosomal subunit protein bS20 (91 aa).

A compositionally biased stretch (basic and acidic residues) spans 1–21 (MPLHKSAEKRLRQAARRNERN). Residues 1–24 (MPLHKSAEKRLRQAARRNERNRAR) are disordered.

This sequence belongs to the bacterial ribosomal protein bS20 family.

Binds directly to 16S ribosomal RNA. This chain is Small ribosomal subunit protein bS20, found in Chlorobaculum parvum (strain DSM 263 / NCIMB 8327) (Chlorobium vibrioforme subsp. thiosulfatophilum).